We begin with the raw amino-acid sequence, 2070 residues long: HEAT repeat-containing protein 5B (2070 aa).

HEAT repeat units lie at residues 848-885 (EVRK…VVGE), 1062-1099 (VNLS…REAA), and 1290-1327 (LHLS…KFAS). A Phosphoserine modification is found at serine 1737.

This sequence belongs to the HEATR5 family. As to quaternary structure, self-associates. Component of the aftiphilin/p200/gamma-synergin complex, at least composed of AFTPH/aftiphilin, HEATR5B/p200a and SYNRG/gamma-synergin, which plays a role in the AP1G1/AP-1-mediated protein trafficking from early to recycling endosomes and between the trans-Golgi network (TGN) and endosomes. Within the complex interacts with AFTPH/aftiphilin and SYNRG/gamma-synergin; the interactions are direct. Interacts with GGA1.

Its subcellular location is the cytoplasm. The protein resides in the perinuclear region. It localises to the cytoplasmic vesicle. The protein localises to the clathrin-coated vesicle. Functionally, component of clathrin-coated vesicles. Component of the aftiphilin/p200/gamma-synergin complex, which plays roles in AP1G1/AP-1-mediated protein trafficking including the trafficking of transferrin from early to recycling endosomes, and the membrane trafficking of furin and the lysosomal enzyme cathepsin D between the trans-Golgi network (TGN) and endosomes. The chain is HEAT repeat-containing protein 5B (Heatr5b) from Mus musculus (Mouse).